Here is a 443-residue protein sequence, read N- to C-terminus: Tubulin beta chain (443 aa).

8 residues coordinate GTP: Gln11, Glu69, Ser138, Gly142, Thr143, Gly144, Asn204, and Asn226. Glu69 is a binding site for Mg(2+). Residues 421 to 443 form a disordered region; it reads EYQQYQDASAEEEGEFGEEEEEN. The segment covering 429–443 has biased composition (acidic residues); that stretch reads SAEEEGEFGEEEEEN.

The protein belongs to the tubulin family. Dimer of alpha and beta chains. A typical microtubule is a hollow water-filled tube with an outer diameter of 25 nm and an inner diameter of 15 nM. Alpha-beta heterodimers associate head-to-tail to form protofilaments running lengthwise along the microtubule wall with the beta-tubulin subunit facing the microtubule plus end conferring a structural polarity. Microtubules usually have 13 protofilaments but different protofilament numbers can be found in some organisms and specialized cells. Mg(2+) serves as cofactor.

The protein localises to the cytoplasm. Its subcellular location is the cytoskeleton. Its function is as follows. Tubulin is the major constituent of microtubules, a cylinder consisting of laterally associated linear protofilaments composed of alpha- and beta-tubulin heterodimers. Microtubules grow by the addition of GTP-tubulin dimers to the microtubule end, where a stabilizing cap forms. Below the cap, tubulin dimers are in GDP-bound state, owing to GTPase activity of alpha-tubulin. This is Tubulin beta chain (TUBB1) from Polytomella agilis (Quadriflagellate alga).